A 1026-amino-acid chain; its full sequence is Lon protease homolog, mitochondrial (1026 aa).

Residues 1-29 constitute a mitochondrion transit peptide; it reads MLGTRVTRAVYTRAPLKLQLRALGLHRRY. Disordered regions lie at residues 29 to 55 and 185 to 206; these read YVHN…DKKL and ASEE…DKVS. Positions 62–345 constitute a Lon N-terminal domain; sequence MLALPISRRP…KSLLVLKKEL (284 aa). Positions 185–194 are enriched in acidic residues; sequence ASEETKDEET. Residues 195 to 206 show a composition bias toward basic and acidic residues; sequence VDKTESATDKVS. Residue 497 to 504 coordinates ATP; the sequence is GPPGVGKT. The tract at residues 711–785 is disordered; sequence TEPLVSTSEE…EEEEDTSMIV (75 aa). Residues 714 to 737 show a composition bias toward polar residues; that stretch reads LVSTSEEPQLSQTNQNISSSSAED. Residues 815–1001 form the Lon proteolytic domain; sequence TTPPGVIMGL…DDIYKRLFSG (187 aa). Active-site residues include serine 907 and lysine 950.

Belongs to the peptidase S16 family. As to quaternary structure, homohexamer or homoheptamer. Organized in a ring with a central cavity.

Its subcellular location is the mitochondrion matrix. It carries out the reaction Hydrolysis of proteins in presence of ATP.. In terms of biological role, ATP-dependent serine protease that mediates the selective degradation of misfolded, unassembled or oxidatively damaged polypeptides as well as certain short-lived regulatory proteins in the mitochondrial matrix. May also have a chaperone function in the assembly of inner membrane protein complexes. Participates in the regulation of mitochondrial gene expression and in the maintenance of the integrity of the mitochondrial genome. Binds to mitochondrial DNA in a site-specific manner. In Candida glabrata (strain ATCC 2001 / BCRC 20586 / JCM 3761 / NBRC 0622 / NRRL Y-65 / CBS 138) (Yeast), this protein is Lon protease homolog, mitochondrial.